The chain runs to 353 residues: Probable G-protein coupled receptor 139 (353 aa).

Residues 1–29 are Extracellular-facing; sequence MEHTHAHLAANSSLSWWSPGSACGLGFVP. Residue N11 is glycosylated (N-linked (GlcNAc...) asparagine). A helical transmembrane segment spans residues 30-50; sequence VVYYSLLLCLGLPANILTVII. The Cytoplasmic portion of the chain corresponds to 51–65; that stretch reads LSQLVARRQKSSYNY. The chain crosses the membrane as a helical span at residues 66–86; it reads LLALAAADILVLFFIVFVDFL. Residues 87–102 lie on the Extracellular side of the membrane; it reads LEDFILNMQMPQVPDK. Residues 103–123 form a helical membrane-spanning segment; that stretch reads IIEVLEFSSIHTSIWITVPLT. The Cytoplasmic portion of the chain corresponds to 124-148; that stretch reads IDRYIAVCHPLKYHTVSYPARTRKV. Residues 149–169 traverse the membrane as a helical segment; it reads IVSVYITCFLTSIPYYWWPNI. Residues 170 to 181 are Extracellular-facing; that stretch reads WTEDYISTSVHH. The chain crosses the membrane as a helical span at residues 182-202; the sequence is VLIWIHCFTVYLVPCSIFFIL. At 203-228 the chain is on the cytoplasmic side; it reads NSIIVYKLRRKSNFRLRGYSTGKTTA. A helical membrane pass occupies residues 229–249; that stretch reads ILFTITSIFATLWAPRIIMIL. The Extracellular segment spans residues 250–268; sequence YHLYGAPIQNRWLVHIMSD. The chain crosses the membrane as a helical span at residues 269–289; it reads IANMLALLNTAINFFLYCFIS. At 290-353 the chain is on the cytoplasmic side; the sequence is KRFRTMAAAT…KNGKPIKVSP (64 aa).

The protein belongs to the G-protein coupled receptor 1 family. As to expression, expressed almost exclusively in the brain. Detected at very low levels in the peripheral tissues.

The protein resides in the cell membrane. In terms of biological role, orphan receptor. Seems to act through a G(q/11)-mediated pathway. In Homo sapiens (Human), this protein is Probable G-protein coupled receptor 139 (GPR139).